We begin with the raw amino-acid sequence, 431 residues long: Glutamate-1-semialdehyde 2,1-aminomutase (431 aa).

Position 266 is an N6-(pyridoxal phosphate)lysine (K266).

Belongs to the class-III pyridoxal-phosphate-dependent aminotransferase family. HemL subfamily. In terms of assembly, homodimer. It depends on pyridoxal 5'-phosphate as a cofactor.

Its subcellular location is the cytoplasm. The enzyme catalyses (S)-4-amino-5-oxopentanoate = 5-aminolevulinate. The protein operates within porphyrin-containing compound metabolism; protoporphyrin-IX biosynthesis; 5-aminolevulinate from L-glutamyl-tRNA(Glu): step 2/2. This is Glutamate-1-semialdehyde 2,1-aminomutase from Wolinella succinogenes (strain ATCC 29543 / DSM 1740 / CCUG 13145 / JCM 31913 / LMG 7466 / NCTC 11488 / FDC 602W) (Vibrio succinogenes).